The following is a 185-amino-acid chain: Elongation factor P (185 aa).

The protein belongs to the elongation factor P family.

It localises to the cytoplasm. It functions in the pathway protein biosynthesis; polypeptide chain elongation. Involved in peptide bond synthesis. Stimulates efficient translation and peptide-bond synthesis on native or reconstituted 70S ribosomes in vitro. Probably functions indirectly by altering the affinity of the ribosome for aminoacyl-tRNA, thus increasing their reactivity as acceptors for peptidyl transferase. The chain is Elongation factor P from Kosmotoga olearia (strain ATCC BAA-1733 / DSM 21960 / TBF 19.5.1).